The chain runs to 478 residues: Divinyl ether synthase CYP74D1 (478 aa).

C431 contacts heme.

It belongs to the cytochrome P450 family. 9-divinyl ether synthase subfamily. In terms of tissue distribution, expressed in roots. Detected in stems, but not in flower buds, petioles, cotyledons or leaves.

The enzyme catalyses (9S)-hydroperoxy-(10E,12Z)-octadecadienoate = colneleate + H2O. It carries out the reaction (9S)-hydroperoxy-(10E,12Z,15Z)-octadecatrienoate = colnelenate + H2O. In terms of biological role, involved in the biosynthesis of the anti-fungal toxins colneleate and colnelenate. Can use (9S)-hydroperoxy-(10E,12Z)-octadecadienoate (9-HPOD) and (9S)-hydroperoxy-(10E,12Z,15Z)-octadecatrienoate (9-HPOT) as substrates, but has a very low activity with the corresponding 13-hydroperoxides (13-HPOD and 13-POT). The polypeptide is Divinyl ether synthase CYP74D1 (Solanum lycopersicum (Tomato)).